A 354-amino-acid chain; its full sequence is MCGRTSCHLPRDVLTRACAYQDRRGQQRLPEWRDPDKYCPSYNKSPQSNSPVLLSRLHFVKDADSSERIIAPMRWGLVPSWFKESDPSKLQFNTTNCRNDTIMEKRSFKVPLGKGRRCVVLADGFYEWQRCQGTNQRQPYFIYFPQIKTEKSGSIGAADSPENWGKVWDNWRLLTMAGIFDCWEPPEGGDVLYSYTIITVDSCKGLSDIHHRMPAILDGEEAVSKWLDFGKVSTQEALKLIHPTENITFHAVSSVVNNSRNNTPECLAPVDLVVRKELKASGSSQRMLQWLATKSPKKEDSKTPQKEESDVPQWSSQFLQKSPLPTKRGTAGLLEQWLKREKEEEPVAKRPYSQ.

The Nucleophile role is filled by Cys2. Cys2 is subject to Thiazolidine linkage to a ring-opened DNA abasic site. Glu127 is an active-site residue. Glycyl lysine isopeptide (Lys-Gly) (interchain with G-Cter in SUMO2) cross-links involve residues Lys148 and Lys151. Ser160 carries the phosphoserine modification. Lys276 is covalently cross-linked (Glycyl lysine isopeptide (Lys-Gly) (interchain with G-Cter in SUMO2)). The tract at residues 292–354 is disordered; the sequence is ATKSPKKEDS…EPVAKRPYSQ (63 aa). Phosphoserine is present on Ser295. The span at 296 to 309 shows a compositional bias: basic and acidic residues; it reads PKKEDSKTPQKEES. Lys306 participates in a covalent cross-link: Glycyl lysine isopeptide (Lys-Gly) (interchain with G-Cter in SUMO2). Ser322 carries the post-translational modification Phosphoserine. The PIP-box motif lies at 332–338; sequence GLLEQWL. Positions 337–348 are enriched in basic and acidic residues; the sequence is WLKREKEEEPVA. Glycyl lysine isopeptide (Lys-Gly) (interchain with G-Cter in SUMO2) cross-links involve residues Lys339 and Lys342.

Belongs to the SOS response-associated peptidase family. In terms of assembly, interacts (via PIP-box motif) with PCNA. Ubiquitinated; the covalent HMCES DNA-protein cross-link is ubiquitinated, leading to its degradation by the proteasome.

It localises to the chromosome. Its activity is regulated as follows. Formation and reversal of DNA-protein cross-link depends on DNA context. Catalyzes formation of the thiazolidine linkage in presence of abasic sites in single-stranded DNA. Mediates the reversal of the thiazolidine cross-link in presence of double stranded DNA. In terms of biological role, sensor of abasic sites in single-stranded DNA (ssDNA) required to preserve genome integrity by promoting error-free repair of abasic sites. Acts as an enzyme that recognizes and binds abasic sites in ssDNA at replication forks and chemically modifies the lesion by forming a covalent cross-link with DNA: forms a stable thiazolidine linkage between a ring-opened abasic site and the alpha-amino and sulfhydryl substituents of its N-terminal catalytic cysteine residue. Promotes error-free repair by protecting abasic sites from translesion synthesis (TLS) polymerases and endonucleases that are error-prone and would generate mutations and double-strand breaks. The HMCES DNA-protein cross-link is then either reversed or degraded. HMCES is able to catalyze the reversal of its thiazolidine cross-link and cycle between a cross-link and a non-cross-linked state depending on DNA context: mediates self-reversal of the thiazolidine cross-link in double stranded DNA, allowing APEX1 to initiate downstream repair of abasic sites. The HMCES DNA-protein cross-link can also be degraded by the SPRTN metalloprotease following unfolding by the BRIP1/FANCJ helicase. Has preference for ssDNA, but can also accommodate double-stranded DNA with 3' or 5' overhang (dsDNA), and dsDNA-ssDNA 3' junction. Plays a protective role during somatic hypermutation of immunoglobulin genes in B-cells: acts via its ability to form covalent cross-links with abasic sites, thereby limiting the accumulation of deletions in somatic hypermutation target regions. Also involved in class switch recombination (CSR) in B-cells independently of the formation of a DNA-protein cross-link: acts by binding and protecting ssDNA overhangs to promote DNA double-strand break repair through the microhomology-mediated alternative-end-joining (Alt-EJ) pathway. Acts as a protease: mediates autocatalytic processing of its N-terminal methionine in order to expose the catalytic cysteine. The protein is Abasic site processing protein HMCES of Pongo abelii (Sumatran orangutan).